The sequence spans 106 residues: MVNVPKTRRTFCKKCGKHQPHKVTQYKKGKDSLYAQGRRRYDRKRSGYGGQTKPIFRKKAKTTKKIVLRLECVEPNCRSKRMLAIKRCKHFELGGDKKRKGQVIQF.

The disordered stretch occupies residues 34–53; it reads YAQGRRRYDRKRSGYGGQTK. Position 53 is an N6-methyllysine (lysine 53).

Belongs to the eukaryotic ribosomal protein eL42 family.

Its subcellular location is the cytoplasm. The chain is Large ribosomal subunit protein eL42 (RPL36AL) from Pongo abelii (Sumatran orangutan).